A 193-amino-acid chain; its full sequence is Oleosin S1-2 (193 aa).

At alanine 2 the chain carries N-acetylalanine. Residues 2–39 are polar; it reads ADVRTHAHQVQVHPLRQHEGGIKVVYPQSGPSSTQVLA. A run of 3 helical transmembrane segments spans residues 37 to 57, 66 to 86, and 87 to 107; these read VLAV…AGLT, ILAF…AFVI, and GLAM…LSSM. Residues 40-113 form a hydrophobic region; sequence VVAGVPVGGT…LSSMSWVLNH (74 aa). Residues 139–193 form a disordered region; that stretch reads AGQRTKDAGQTIEDKAHDVRESKTYDVRDRDTKGHTASGGDRDTKTTREVRVATT. Over residues 142–193 the composition is skewed to basic and acidic residues; the sequence is RTKDAGQTIEDKAHDVRESKTYDVRDRDTKGHTASGGDRDTKTTREVRVATT.

The protein belongs to the oleosin family.

The protein resides in the lipid droplet. It is found in the membrane. Functionally, may have a structural role to stabilize the lipid body during desiccation of the seed by preventing coalescence of the oil. Probably interacts with both lipid and phospholipid moieties of lipid bodies. May also provide recognition signals for specific lipase anchorage in lipolysis during seedling growth. This Brassica napus (Rape) protein is Oleosin S1-2 (S1).